Consider the following 833-residue polypeptide: Major vault protein (833 aa).

7 MVP repeats span residues 54–118 (RHYC…QLIP), 119–170 (PNTG…TVIY), 171–223 (PNTA…TMLS), 224–278 (DLKA…VSLS), 280–328 (KEYV…LVVG), 329–380 (KEEA…MALD), and 381–433 (KNEG…SIQT).

In terms of assembly, the vault ribonucleoprotein particle is a huge (400 A x 670 A) cage structure of 12.9 MDa. It consists of a dimer of half-vaults, with each half-vault comprising 39 identical major vault protein (MVP) chains, PARP4 and one or more vault RNAs (vRNAs).

The protein resides in the cytoplasm. The protein localises to the nucleus. Its function is as follows. Required for normal vault structure. Vaults are multi-subunit structures that may act as scaffolds for proteins involved in signal transduction. Vaults may also play a role in nucleo-cytoplasmic transport. This Leishmania infantum protein is Major vault protein.